The chain runs to 156 residues: DNA mismatch endonuclease Vsr (156 aa).

Mg(2+) contacts are provided by aspartate 51 and threonine 63.

This sequence belongs to the Vsr family. It depends on Mg(2+) as a cofactor. Requires Zn(2+) as cofactor.

Functionally, deamination of 5-methylcytosine in DNA results in T/G mismatches. If unrepaired, these mismatches can lead to C-to-T transition mutations. The very short patch (VSP) repair process in E.coli counteracts the mutagenic process by repairing the mismatches in favor of the G-containing strand. This enzyme is an endonuclease that nicks double-stranded DNA within the sequence CT(AT)GN or NT(AT)GG next to the thymidine residue that is mismatched to 2'-deoxyguanosine. The incision is mismatch-dependent and strand-specific. In Escherichia coli (strain K12), this protein is DNA mismatch endonuclease Vsr.